The sequence spans 669 residues: Dymeclin (669 aa).

Glycine 2 carries the N-myristoyl glycine lipid modification.

This sequence belongs to the dymeclin family. Myristoylated in vitro; myristoylation is not essential for protein targeting to Golgi compartment.

It is found in the cytoplasm. Its subcellular location is the golgi apparatus. Its function is as follows. Necessary for correct organization of Golgi apparatus. This Gallus gallus (Chicken) protein is Dymeclin (DYM).